Consider the following 434-residue polypeptide: MKHSKKIVTALLALAMSQTVMAAPVALDRVSVQINDGIILESEIGNMLATVRANANKSNQTLPSEQALRTQVIERLILTRLQLQMAERIGLQIGDLQLDQTIESIAKDQKLTVSQLQQQLENDGLSFSQYREQLREEITLGEIQRIQVQRRIQVSPQEISGLVKLMQEQGLKEVEFQIGHILIDVPSEPSSEQLEASSKRANIVLKRLNEGEDFRSTAIASSSGPKALEGGIWDYMNINEMPTLFAEVVNGAKVGDIIGPIKSGSGFHIIKVMDARGLQTKEVEEVKSRHILLKPSPILSEERAKAMLVNFQKQILSGEADFAELARQYSEDPGSAAKGGELGWSSPDVYVPEFAQTLNSLKENEMSEPFRTTHGWHLTQLMDKRKTDATEQFNSNRAHQLIFRRKFNEELQAWLDEMRSDAYIEVFEPEVNRG.

The first 22 residues, 1-22, serve as a signal peptide directing secretion; the sequence is MKHSKKIVTALLALAMSQTVMA. PpiC domains are found at residues 173 to 274 and 283 to 383; these read EVEF…KVMD and VEEV…QLMD.

It is found in the periplasm. The catalysed reaction is [protein]-peptidylproline (omega=180) = [protein]-peptidylproline (omega=0). In terms of biological role, chaperone involved in the correct folding and assembly of outer membrane proteins. Recognizes specific patterns of aromatic residues and the orientation of their side chains, which are found more frequently in integral outer membrane proteins. May act in both early periplasmic and late outer membrane-associated steps of protein maturation. The protein is Chaperone SurA of Shewanella denitrificans (strain OS217 / ATCC BAA-1090 / DSM 15013).